A 269-amino-acid chain; its full sequence is Formamidopyrimidine-DNA glycosylase (269 aa).

P2 acts as the Schiff-base intermediate with DNA in catalysis. Catalysis depends on E3, which acts as the Proton donor. K57 (proton donor; for beta-elimination activity) is an active-site residue. 3 residues coordinate DNA: H90, R109, and K150. An FPG-type zinc finger spans residues 235-269 (QVYGKAGESCPECGEAIQELKIGQRNTFYCSYCQC). The Proton donor; for delta-elimination activity role is filled by R259.

This sequence belongs to the FPG family. In terms of assembly, monomer. Requires Zn(2+) as cofactor.

The enzyme catalyses Hydrolysis of DNA containing ring-opened 7-methylguanine residues, releasing 2,6-diamino-4-hydroxy-5-(N-methyl)formamidopyrimidine.. The catalysed reaction is 2'-deoxyribonucleotide-(2'-deoxyribose 5'-phosphate)-2'-deoxyribonucleotide-DNA = a 3'-end 2'-deoxyribonucleotide-(2,3-dehydro-2,3-deoxyribose 5'-phosphate)-DNA + a 5'-end 5'-phospho-2'-deoxyribonucleoside-DNA + H(+). Functionally, involved in base excision repair of DNA damaged by oxidation or by mutagenic agents. Acts as a DNA glycosylase that recognizes and removes damaged bases. Has a preference for oxidized purines, such as 7,8-dihydro-8-oxoguanine (8-oxoG). Has AP (apurinic/apyrimidinic) lyase activity and introduces nicks in the DNA strand. Cleaves the DNA backbone by beta-delta elimination to generate a single-strand break at the site of the removed base with both 3'- and 5'-phosphates. This Vibrio vulnificus (strain YJ016) protein is Formamidopyrimidine-DNA glycosylase.